Consider the following 84-residue polypeptide: Small ribosomal subunit protein eS27 (84 aa).

Residues 1 to 16 (MPLAKDLLHPSPEEEK) are compositionally biased toward basic and acidic residues. The tract at residues 1–23 (MPLAKDLLHPSPEEEKRKHKKKR) is disordered. Ser-11 bears the Phosphoserine mark. The C4-type zinc-finger motif lies at 38 to 60 (PGCYKITTVFSHAQTVVLCVGCS).

Belongs to the eukaryotic ribosomal protein eS27 family. Component of the small ribosomal subunit. Part of the small subunit (SSU) processome, composed of more than 70 proteins and the RNA chaperone small nucleolar RNA (snoRNA) U3. The cofactor is Zn(2+).

Its subcellular location is the cytoplasm. The protein resides in the nucleus. It localises to the nucleolus. Component of the small ribosomal subunit. The ribosome is a large ribonucleoprotein complex responsible for the synthesis of proteins in the cell. Required for proper rRNA processing and maturation of 18S rRNAs. Part of the small subunit (SSU) processome, first precursor of the small eukaryotic ribosomal subunit. During the assembly of the SSU processome in the nucleolus, many ribosome biogenesis factors, an RNA chaperone and ribosomal proteins associate with the nascent pre-rRNA and work in concert to generate RNA folding, modifications, rearrangements and cleavage as well as targeted degradation of pre-ribosomal RNA by the RNA exosome. This Mus musculus (Mouse) protein is Small ribosomal subunit protein eS27.